The chain runs to 278 residues: HTH-type transcriptional activator RhaS (278 aa).

The region spanning 174–272 is the HTH araC/xylS-type domain; that stretch reads NLLLAWLEDH…NWSPRDIRQG (99 aa). DNA-binding regions (H-T-H motif) lie at residues 191–212 and 239–262; these read DAVA…KQQT and VTDI…HREF.

As to quaternary structure, binds DNA as a dimer.

The protein localises to the cytoplasm. In terms of biological role, activates expression of the rhaBAD and rhaT operons. This Shigella boydii serotype 18 (strain CDC 3083-94 / BS512) protein is HTH-type transcriptional activator RhaS.